Here is a 212-residue protein sequence, read N- to C-terminus: Agamous-like MADS-box protein MADS9 (212 aa).

Residues 1-61 (MGRGKIEIKR…GKMHEYCSPS (61 aa)) enclose the MADS-box domain. The region spanning 84–170 (HENLNNELDR…NYIVHHQGMP (87 aa)) is the K-box domain.

Expressed during flower development in stamens and petals.

Its subcellular location is the nucleus. Functionally, probable transcription factor that may play role in specifying stamen and petal organ identity. In Vitis vinifera (Grape), this protein is Agamous-like MADS-box protein MADS9.